We begin with the raw amino-acid sequence, 364 residues long: tRNA 2-selenouridine synthase (364 aa).

The region spanning 14-137 is the Rhodanese domain; sequence LIADTPIIDV…LRQTAIQATI (124 aa). C97 functions as the S-selanylcysteine intermediate in the catalytic mechanism.

This sequence belongs to the SelU family. Monomer.

The catalysed reaction is 5-methylaminomethyl-2-thiouridine(34) in tRNA + selenophosphate + (2E)-geranyl diphosphate + H2O + H(+) = 5-methylaminomethyl-2-selenouridine(34) in tRNA + (2E)-thiogeraniol + phosphate + diphosphate. It catalyses the reaction 5-methylaminomethyl-2-thiouridine(34) in tRNA + (2E)-geranyl diphosphate = 5-methylaminomethyl-S-(2E)-geranyl-thiouridine(34) in tRNA + diphosphate. It carries out the reaction 5-methylaminomethyl-S-(2E)-geranyl-thiouridine(34) in tRNA + selenophosphate + H(+) = 5-methylaminomethyl-2-(Se-phospho)selenouridine(34) in tRNA + (2E)-thiogeraniol. The enzyme catalyses 5-methylaminomethyl-2-(Se-phospho)selenouridine(34) in tRNA + H2O = 5-methylaminomethyl-2-selenouridine(34) in tRNA + phosphate. In terms of biological role, involved in the post-transcriptional modification of the uridine at the wobble position (U34) of tRNA(Lys), tRNA(Glu) and tRNA(Gln). Catalyzes the conversion of 2-thiouridine (S2U-RNA) to 2-selenouridine (Se2U-RNA). Acts in a two-step process involving geranylation of 2-thiouridine (S2U) to S-geranyl-2-thiouridine (geS2U) and subsequent selenation of the latter derivative to 2-selenouridine (Se2U) in the tRNA chain. This chain is tRNA 2-selenouridine synthase, found in Escherichia coli O6:K15:H31 (strain 536 / UPEC).